We begin with the raw amino-acid sequence, 378 residues long: Erythronate-4-phosphate dehydrogenase (378 aa).

The substrate site is built by Ser45 and Thr66. NAD(+) is bound by residues Asp146 and Thr175. Residue Arg208 is part of the active site. Asp232 is an NAD(+) binding site. Glu237 is an active-site residue. His254 acts as the Proton donor in catalysis. Residue Gly257 participates in NAD(+) binding. Tyr258 serves as a coordination point for substrate.

This sequence belongs to the D-isomer specific 2-hydroxyacid dehydrogenase family. PdxB subfamily. As to quaternary structure, homodimer.

The protein resides in the cytoplasm. The enzyme catalyses 4-phospho-D-erythronate + NAD(+) = (R)-3-hydroxy-2-oxo-4-phosphooxybutanoate + NADH + H(+). It functions in the pathway cofactor biosynthesis; pyridoxine 5'-phosphate biosynthesis; pyridoxine 5'-phosphate from D-erythrose 4-phosphate: step 2/5. Functionally, catalyzes the oxidation of erythronate-4-phosphate to 3-hydroxy-2-oxo-4-phosphonooxybutanoate. This chain is Erythronate-4-phosphate dehydrogenase, found in Escherichia coli O127:H6 (strain E2348/69 / EPEC).